A 525-amino-acid polypeptide reads, in one-letter code: GMP synthase [glutamine-hydrolyzing] (525 aa).

A Glutamine amidotransferase type-1 domain is found at 7–207; that stretch reads RILVIDFGSQ…ITCICRCKSS (201 aa). Cysteine 84 serves as the catalytic Nucleophile. Residues histidine 181 and glutamate 183 contribute to the active site. The GMPS ATP-PPase domain occupies 208–400; that stretch reads WKIANIIDDI…LGIPYDIAYR (193 aa). ATP is bound at residue 235–241; sequence SGGIDSL.

In terms of assembly, homodimer.

It carries out the reaction XMP + L-glutamine + ATP + H2O = GMP + L-glutamate + AMP + diphosphate + 2 H(+). The protein operates within purine metabolism; GMP biosynthesis; GMP from XMP (L-Gln route): step 1/1. In terms of biological role, catalyzes the synthesis of GMP from XMP. The protein is GMP synthase [glutamine-hydrolyzing] of Blochmanniella pennsylvanica (strain BPEN).